Consider the following 341-residue polypeptide: uncharacterized protein (341 aa).

Belongs to the Gfo/Idh/MocA family.

This is an uncharacterized protein from Bacillus subtilis (strain 168).